The sequence spans 429 residues: Phosphomethylpyrimidine synthase (429 aa).

Substrate-binding positions include Asn-66, Met-95, Tyr-124, His-163, 185–187 (SRG), 226–229 (DGLR), and Glu-265. His-269 lines the Zn(2+) pocket. Tyr-292 contacts substrate. Residue His-333 participates in Zn(2+) binding. 3 residues coordinate [4Fe-4S] cluster: Cys-407, Cys-410, and Cys-414.

The protein belongs to the ThiC family. [4Fe-4S] cluster serves as cofactor.

The catalysed reaction is 5-amino-1-(5-phospho-beta-D-ribosyl)imidazole + S-adenosyl-L-methionine = 4-amino-2-methyl-5-(phosphooxymethyl)pyrimidine + CO + 5'-deoxyadenosine + formate + L-methionine + 3 H(+). It functions in the pathway cofactor biosynthesis; thiamine diphosphate biosynthesis. Functionally, catalyzes the synthesis of the hydroxymethylpyrimidine phosphate (HMP-P) moiety of thiamine from aminoimidazole ribotide (AIR) in a radical S-adenosyl-L-methionine (SAM)-dependent reaction. The protein is Phosphomethylpyrimidine synthase of Pyrococcus furiosus (strain ATCC 43587 / DSM 3638 / JCM 8422 / Vc1).